Here is a 440-residue protein sequence, read N- to C-terminus: Chromosomal replication initiator protein DnaA (440 aa).

The tract at residues 1–74 (MNPSQILENL…VQSGNKAIIN (74 aa)) is domain I, interacts with DnaA modulators. The tract at residues 74-99 (NIQAQSAKQSNKSTKIDIAHIKAQST) is domain II. Positions 100-316 (ILNPSFTFDS…GIIISLNAYA (217 aa)) are domain III, AAA+ region. G146, G148, K149, and T150 together coordinate ATP. Positions 317–440 (TILGQEITLE…KNKILVKSQS (124 aa)) are domain IV, binds dsDNA.

The protein belongs to the DnaA family. Oligomerizes as a right-handed, spiral filament on DNA at oriC.

It localises to the cytoplasm. Its function is as follows. Plays an essential role in the initiation and regulation of chromosomal replication. ATP-DnaA binds to the origin of replication (oriC) to initiate formation of the DNA replication initiation complex once per cell cycle. Binds the DnaA box (a 9 base pair repeat at the origin) and separates the double-stranded (ds)DNA. Forms a right-handed helical filament on oriC DNA; dsDNA binds to the exterior of the filament while single-stranded (ss)DNA is stabiized in the filament's interior. The ATP-DnaA-oriC complex binds and stabilizes one strand of the AT-rich DNA unwinding element (DUE), permitting loading of DNA polymerase. After initiation quickly degrades to an ADP-DnaA complex that is not apt for DNA replication. Binds acidic phospholipids. This Campylobacter jejuni subsp. jejuni serotype O:23/36 (strain 81-176) protein is Chromosomal replication initiator protein DnaA.